The chain runs to 78 residues: Polcalcin Phl p 7 (78 aa).

2 EF-hand domains span residues 1 to 35 (MADDMERIFKRFDTNGDGKISLSELTDALRTLGST) and 35 to 70 (TSADEVQRMMAEIDTDGDGFIDFNEFISFCNANPGL). Aspartate 13, asparagine 15, aspartate 17, lysine 19, glutamate 24, aspartate 48, aspartate 50, aspartate 52, and glutamate 59 together coordinate Ca(2+).

Monomer. As to expression, specifically expressed in pollen.

Functionally, may be involved in the regulation of pollen-tube growth. This chain is Polcalcin Phl p 7, found in Phleum pratense (Common timothy).